The primary structure comprises 879 residues: Band 4.1-like protein 1 (879 aa).

The interval 1–64 (MTTETGPDSE…RPAEQSLDME (64 aa)) is disordered. The segment covering 17-35 (ETPQQPEAAAAVTTPVTPA) has biased composition (low complexity). Thr30 carries the phosphothreonine modification. Basic and acidic residues predominate over residues 38–50 (SHPETNSNEKHLT). Ser75 bears the Phosphoserine mark. A Phosphothreonine modification is found at Thr79. The region spanning 97-378 (ATCRVTLLDA…EHHTFFRLVS (282 aa)) is the FERM domain. The residue at position 343 (Tyr343) is a Phosphotyrosine. 5 positions are modified to phosphoserine: Ser378, Ser430, Ser437, Ser461, and Ser466. The segment at 428 to 501 (SRSLDGAEFS…HKQEFLDKPE (74 aa)) is disordered. Residues 444-501 (ENHDAGPDGDKREDDAESGGRRSEAEEGEVRTPTKIKELKPEQETTPRHKQEFLDKPE) are compositionally biased toward basic and acidic residues. At Thr475 the chain carries Phosphothreonine. The spectrin--actin-binding stretch occupies residues 483–541 (KPEQETTPRHKQEFLDKPEDVLLKHQASINELKRTLKEPNSKLIHRDRDWERERRLPSS). At Ser510 the chain carries Phosphoserine. Residues 514–538 (LKRTLKEPNSKLIHRDRDWERERRL) are compositionally biased toward basic and acidic residues. Disordered stretches follow at residues 514–596 (LKRT…FLKD), 633–687 (FEDF…STPE), and 718–742 (SRVSTADSTQVDGGAPAAKDFMTTP). Phosphoserine is present on residues Ser540, Ser541, Ser544, and Ser546. At Thr550 the chain carries Phosphothreonine. Basic and acidic residues predominate over residues 550–577 (TPEKASERAGLREGSEEKVKPPRPRAPE). Phosphoserine is present on residues Ser564 and Ser578. Thr580 is modified (phosphothreonine). Glu583, Gln587, Ser639, Ser648, Ser650, Ser665, Ser666, Asp669, Ser671, Ser677, and Ser684 each carry phosphoserine. Residues 635-650 (DFSRSLPELDRDKSDS) are compositionally biased toward basic and acidic residues. Thr685 carries the phosphothreonine modification. Residues 718–728 (SRVSTADSTQV) show a composition bias toward polar residues. Residues Ser721, Pro742, Ala766, Ser782, and Ser868 each carry the phosphoserine modification. Positions 744 to 879 (CITTETISTT…EERDKKPQES (136 aa)) are C-terminal (CTD).

In terms of assembly, interacts with AGAP2. As to expression, highest expression in brain, lower in heart and kidney. Within the brain, highest expression in cerebellum.

It localises to the cytoplasm. Its subcellular location is the cytoskeleton. Functionally, may function to confer stability and plasticity to neuronal membrane via multiple interactions, including the spectrin-actin-based cytoskeleton, integral membrane channels and membrane-associated guanylate kinases. The protein is Band 4.1-like protein 1 of Rattus norvegicus (Rat).